Reading from the N-terminus, the 177-residue chain is Coatomer subunit zeta-3 (177 aa).

The protein belongs to the adaptor complexes small subunit family. In terms of assembly, oligomeric complex that consists of at least the alpha, beta, beta', gamma, delta, epsilon and zeta subunits.

It localises to the cytoplasm. The protein localises to the golgi apparatus membrane. It is found in the cytoplasmic vesicle. Its subcellular location is the COPI-coated vesicle membrane. Its function is as follows. The coatomer is a cytosolic protein complex that binds to dilysine motifs and reversibly associates with Golgi non-clathrin-coated vesicles, which further mediate biosynthetic protein transport from the ER, via the Golgi up to the trans Golgi network. Coatomer complex is required for budding from Golgi membranes, and is essential for the retrograde Golgi-to-ER transport of dilysine-tagged proteins. The zeta subunit may be involved in regulating the coat assembly and, hence, the rate of biosynthetic protein transport due to its association-dissociation properties with the coatomer complex. The sequence is that of Coatomer subunit zeta-3 from Oryza sativa subsp. japonica (Rice).